The primary structure comprises 278 residues: Transmembrane protein 45B (278 aa).

Helical transmembrane passes span His7–Leu27, Ile49–Val69, Tyr95–Val115, Leu117–Phe137, Ile149–Ile169, Leu183–Gly203, and Ile215–Ile235. Phosphoserine occurs at positions 273 and 275.

The protein belongs to the TMEM45 family.

The protein localises to the endosome membrane. It is found in the lysosome membrane. The protein resides in the golgi apparatus. It localises to the trans-Golgi network membrane. Functionally, plays a role in innate immunity. In Mus musculus (Mouse), this protein is Transmembrane protein 45B (Tmem45b).